Reading from the N-terminus, the 244-residue chain is 1-(5-phosphoribosyl)-5-[(5-phosphoribosylamino)methylideneamino] imidazole-4-carboxamide isomerase (244 aa).

Residue D8 is the Proton acceptor of the active site. D129 (proton donor) is an active-site residue.

This sequence belongs to the HisA/HisF family.

The protein resides in the cytoplasm. It catalyses the reaction 1-(5-phospho-beta-D-ribosyl)-5-[(5-phospho-beta-D-ribosylamino)methylideneamino]imidazole-4-carboxamide = 5-[(5-phospho-1-deoxy-D-ribulos-1-ylimino)methylamino]-1-(5-phospho-beta-D-ribosyl)imidazole-4-carboxamide. The protein operates within amino-acid biosynthesis; L-histidine biosynthesis; L-histidine from 5-phospho-alpha-D-ribose 1-diphosphate: step 4/9. This chain is 1-(5-phosphoribosyl)-5-[(5-phosphoribosylamino)methylideneamino] imidazole-4-carboxamide isomerase, found in Allorhizobium ampelinum (strain ATCC BAA-846 / DSM 112012 / S4) (Agrobacterium vitis (strain S4)).